The primary structure comprises 276 residues: Small ribosomal subunit protein uS2 (276 aa).

Disordered stretches follow at residues 209–233 and 252–276; these read AQEA…AADV and VDWS…SSWE. The segment covering 211–231 has biased composition (low complexity); it reads EAAAAAQAAKETAEPTTEGAA.

It belongs to the universal ribosomal protein uS2 family. In terms of assembly, component of the small ribosomal subunit. Mature ribosomes consist of a small (40S) and a large (60S) subunit. The 40S subunit contains about 33 different proteins and 1 molecule of RNA (18S). The 60S subunit contains about 49 different proteins and 3 molecules of RNA (25S, 5.8S and 5S). Interacts with RPS21.

The protein localises to the cytoplasm. In terms of biological role, required for the assembly and/or stability of the 40S ribosomal subunit. Required for the processing of the 20S rRNA-precursor to mature 18S rRNA in a late step of the maturation of 40S ribosomal subunits. This is Small ribosomal subunit protein uS2 from Mycosarcoma maydis (Corn smut fungus).